The primary structure comprises 124 residues: U-scoloptoxin-Er5d (124 aa).

An N-terminal signal peptide occupies residues 1–22 (MKTNCEFPLLCLLIVLVANVEG). A propeptide spanning residues 23–94 (EVEDNELKMV…KRLWRNWERR (72 aa)) is cleaved from the precursor. 3 RLWRNWE repeats span residues 34–40 (RLWRNWE), 61–67 (RLWRNWE), and 86–92 (RLWRNWE). The residue at position 95 (Gln95) is a Pyrrolidone carboxylic acid. An RLWRNWE 4; approximate repeat occupies 107–113 (ELWRNWE). A propeptide spanning residues 112 to 124 (WEDLKRRQVGRFE) is cleaved from the precursor.

The protein belongs to the scoloptoxin-08 family. As to expression, expressed by the venom gland.

The protein resides in the secreted. This is U-scoloptoxin-Er5d from Ethmostigmus rubripes (Giant centipede).